The primary structure comprises 108 residues: uncharacterized protein (108 aa).

The N-terminal stretch at 1–22 (MMIKQCVICLSLLVFGTTAAHA) is a signal peptide.

This is an uncharacterized protein from Bacillus subtilis (strain 168).